The primary structure comprises 235 residues: Small ribosomal subunit protein uS2c (235 aa).

This sequence belongs to the universal ribosomal protein uS2 family.

Its subcellular location is the plastid. The protein resides in the chloroplast. In Marchantia polymorpha (Common liverwort), this protein is Small ribosomal subunit protein uS2c (rps2).